The chain runs to 791 residues: FHF complex subunit HOOK-interacting protein 1B (791 aa).

2 disordered regions span residues 465–510 and 524–556; these read APSP…VPRP and SLGGSESPGPAPRSPGLTASPTSSPGRRPSPAE. A Phosphoserine modification is found at S467. Residues 496 to 510 show a composition bias toward low complexity; sequence SPSVDSSSVVTVPRP. Phosphoserine occurs at positions 524, 537, 543, 547, and 679. The segment covering 541-552 has biased composition (low complexity); the sequence is TASPTSSPGRRP. T708 carries the post-translational modification Phosphothreonine. S716 carries the phosphoserine modification.

It belongs to the FHIP family. In terms of assembly, component of the FTS/Hook/FHIP complex (FHF complex), composed of AKTIP/FTS, FHIP1B, and one or more members of the Hook family of proteins HOOK1, HOOK2, and HOOK3. The FHF complex associates with the homotypic vesicular sorting complex (the HOPS complex).

Its function is as follows. Component of the FTS/Hook/FHIP complex (FHF complex). The FHF complex may function to promote vesicle trafficking and/or fusion via the homotypic vesicular protein sorting complex (the HOPS complex). FHF complex promotes the distribution of AP-4 complex to the perinuclear area of the cell. This chain is FHF complex subunit HOOK-interacting protein 1B (Fhip1b), found in Rattus norvegicus (Rat).